Consider the following 147-residue polypeptide: MPKIVKKEPKFVEQSGKKVTKSDEQWREQLSDEEFRVCREQGTEPPFSGKLLHNKETGVYACTCCNAPLFISDNKYDSGCGWPSFDAPLNNEAIRYLEDLSHGMVRTEIRCASCDSHLGHVFEDGPKTTGERYCVNSVSLIFNKSDE.

The span at 1 to 11 (MPKIVKKEPKF) shows a compositional bias: basic and acidic residues. Residues 1–25 (MPKIVKKEPKFVEQSGKKVTKSDEQ) form a disordered region. In terms of domain architecture, MsrB spans 23-145 (DEQWREQLSD…NSVSLIFNKS (123 aa)). Zn(2+)-binding residues include Cys62, Cys65, Cys111, and Cys114. Cys134 (nucleophile) is an active-site residue.

Belongs to the MsrB Met sulfoxide reductase family. Requires Zn(2+) as cofactor.

The enzyme catalyses L-methionyl-[protein] + [thioredoxin]-disulfide + H2O = L-methionyl-(R)-S-oxide-[protein] + [thioredoxin]-dithiol. This Vibrio parahaemolyticus serotype O3:K6 (strain RIMD 2210633) protein is Peptide methionine sulfoxide reductase MsrB.